Reading from the N-terminus, the 418-residue chain is Metacaspase-4 (418 aa).

Catalysis depends on residues H86 and C139. An S-nitrosocysteine modification is found at C139. A disordered region spans residues 153 to 172 (GESTKKEAEDEDESEESSSR).

Belongs to the peptidase C14B family. In terms of processing, the two subunits are derived from the precursor sequence by an autocatalytic mechanism. In terms of tissue distribution, expressed in roots, cotyledons, leaves, cauline leaves, pollen and embryos.

It localises to the cytoplasm. The protein resides in the cytosol. Its activity is regulated as follows. Activated by Ca(2+) which induces self-processing and accelerates the rate of the enzyme activity, but has no effect on Km. Its function is as follows. Cysteine protease that cleaves specifically after arginine or lysine residues. Does not cleave caspase-specific substrates. Plays a positive regulatory role in biotic and abiotic stress-induced programmed cell death. The polypeptide is Metacaspase-4 (AMC4) (Arabidopsis thaliana (Mouse-ear cress)).